A 349-amino-acid polypeptide reads, in one-letter code: D-alanine--D-alanine ligase (349 aa).

Residues 140–345 (NILFEAMGIP…MKDVFTWLLE (206 aa)) enclose the ATP-grasp domain. 169–224 (NLSFSYPVFIKPTLGGSSVNTGMAKTAEEAMTLVDKIFVTDDRVLVQKLVSGTEVS) provides a ligand contact to ATP. Positions 300, 312, and 314 each coordinate Mg(2+).

Belongs to the D-alanine--D-alanine ligase family. Requires Mg(2+) as cofactor. Mn(2+) is required as a cofactor.

It localises to the cytoplasm. It catalyses the reaction 2 D-alanine + ATP = D-alanyl-D-alanine + ADP + phosphate + H(+). It functions in the pathway cell wall biogenesis; peptidoglycan biosynthesis. Functionally, cell wall formation. The protein is D-alanine--D-alanine ligase of Leptospira biflexa serovar Patoc (strain Patoc 1 / Ames).